Consider the following 322-residue polypeptide: 4-hydroxythreonine-4-phosphate dehydrogenase (322 aa).

Residue Thr-132 coordinates substrate. 3 residues coordinate a divalent metal cation: His-160, His-205, and His-260. Positions 268, 277, and 286 each coordinate substrate.

This sequence belongs to the PdxA family. In terms of assembly, homodimer. Zn(2+) serves as cofactor. It depends on Mg(2+) as a cofactor. The cofactor is Co(2+).

It is found in the cytoplasm. It carries out the reaction 4-(phosphooxy)-L-threonine + NAD(+) = 3-amino-2-oxopropyl phosphate + CO2 + NADH. Its pathway is cofactor biosynthesis; pyridoxine 5'-phosphate biosynthesis; pyridoxine 5'-phosphate from D-erythrose 4-phosphate: step 4/5. In terms of biological role, catalyzes the NAD(P)-dependent oxidation of 4-(phosphooxy)-L-threonine (HTP) into 2-amino-3-oxo-4-(phosphooxy)butyric acid which spontaneously decarboxylates to form 3-amino-2-oxopropyl phosphate (AHAP). This is 4-hydroxythreonine-4-phosphate dehydrogenase from Xanthomonas campestris pv. campestris (strain B100).